The sequence spans 184 residues: Large ribosomal subunit protein uL6 (184 aa).

This sequence belongs to the universal ribosomal protein uL6 family. Part of the 50S ribosomal subunit.

In terms of biological role, this protein binds to the 23S rRNA, and is important in its secondary structure. It is located near the subunit interface in the base of the L7/L12 stalk, and near the tRNA binding site of the peptidyltransferase center. This Aster yellows witches'-broom phytoplasma (strain AYWB) protein is Large ribosomal subunit protein uL6.